Here is a 237-residue protein sequence, read N- to C-terminus: DNA repair protein RecO (237 aa).

The protein belongs to the RecO family.

Functionally, involved in DNA repair and RecF pathway recombination. This chain is DNA repair protein RecO, found in Rickettsia conorii (strain ATCC VR-613 / Malish 7).